Here is a 306-residue protein sequence, read N- to C-terminus: Transcription initiation factor IIB (306 aa).

Repeat copies occupy residues 122–205 (NELE…LREL) and 216–297 (DYVT…ELTQ).

Belongs to the TFIIB family.

Its function is as follows. Stabilizes TBP binding to an archaeal box-A promoter. Also responsible for recruiting RNA polymerase II to the pre-initiation complex (DNA-TBP-TFIIB). The protein is Transcription initiation factor IIB of Saccharolobus shibatae (strain ATCC 51178 / DSM 5389 / JCM 8931 / NBRC 15437 / B12) (Sulfolobus shibatae).